We begin with the raw amino-acid sequence, 721 residues long: MFEPNMLLAAMNNADSNNHNYNHEDNNNEGFLRDDEFDSPNTKSGSENQEGGSGNDQDPLHPNKKKRYHRHTQLQIQEMEAFFKECPHPDDKQRKQLSRELNLEPLQVKFWFQNKRTQMKNHHERHENSHLRAENEKLRNDNLRYREALANASCPNCGGPTAIGEMSFDEHQLRLENARLREEIDRISAIAAKYVGKPVSNYPLMSPPPLPPRPLELAMGNIGGEAYGNNPNDLLKSITAPTESDKPVIIDLSVAAMEELMRMVQVDEPLWKSLVLDEEEYARTFPRGIGPRPAGYRSEASRESAVVIMNHVNIVEILMDVNQWSTIFAGMVSRAMTLAVLSTGVAGNYNGALQVMSAEFQVPSPLVPTRETYFARYCKQQGDGSWAVVDISLDSLQPNPPARCRRRASGCLIQELPNGYSKVTWVEHVEVDDRGVHNLYKHMVSTGHAFGAKRWVAILDRQCERLASVMATNISSGEVGVITNQEGRRSMLKLAERMVISFCAGVSASTAHTWTTLSGTGAEDVRVMTRKSVDDPGRPPGIVLSAATSFWIPVPPKRVFDFLRDENSRNEWDILSNGGVVQEMAHIANGRDTGNCVSLLRVNSANSSQSNMLILQESCTDPTASFVIYAPVDIVAMNIVLNGGDPDYVALLPSGFAILPDGNANSGAPGGDGGSLLTVAFQILVDSVPTAKLSLGSVATVNNLIACTVERIKASMSCETA.

The tract at residues asparagine 17–arginine 70 is disordered. Residues tyrosine 21–aspartate 34 show a composition bias toward basic and acidic residues. Residues lysine 64 to histidine 123 constitute a DNA-binding region (homeobox). A coiled-coil region spans residues lysine 120–tyrosine 194. The 227-residue stretch at threonine 242 to serine 468 folds into the START domain.

This sequence belongs to the HD-ZIP homeobox family. Class IV subfamily. Interacts with AIL7/PLT7, ANT, BBM and AIL1. Expressed in hairless cell files of the hypocotyl epidermis. Expressed in shoot apical meristem (SAM) with higher levels in L1 cells and the epidermal layer of young leaves. Expressed in primary root tips, in the L1 of apical inflorescence meristems, early flower primordia, carpel epidermis, ovule primordia, nucellus, chalaze and seed coat.

The protein resides in the nucleus. Functionally, probable transcription factor. Involved, together with PDF2, in the regulation of flower organs development by promoting the expression of APETALA 3 (AP3) in the epidermis and internal cell layers of developing flowers. This Arabidopsis thaliana (Mouse-ear cress) protein is Homeobox-leucine zipper protein HDG2.